The following is a 182-amino-acid chain: uncharacterized protein (182 aa).

Residues 1-29 (MKKLLKKLVVLFLSSLVIIFNVWYFIICA) form the signal peptide. Residues 152–174 (WNLYFWTAASYNAVIFVFVLVIV) traverse the membrane as a helical segment.

The protein resides in the membrane. This is an uncharacterized protein from Bacillus subtilis (strain 168).